Here is a 400-residue protein sequence, read N- to C-terminus: Na(+)/H(+) antiporter NhaA (400 aa).

11 helical membrane passes run 10–30 (FNLE…AMII), 60–80 (AHHW…GLEL), 95–115 (IILP…VYLF), 126–146 (GWAI…SLLG), 155–175 (VFLV…IALF), 178–198 (NDLS…LYLL), 218–238 (VAVL…ALFI), 265–285 (GILP…AGFG), 295–315 (IAAG…WLIF), 334–354 (AALL…LAFA), and 364–384 (LGII…LKAT).

The protein belongs to the NhaA Na(+)/H(+) (TC 2.A.33) antiporter family.

Its subcellular location is the cell inner membrane. The enzyme catalyses Na(+)(in) + 2 H(+)(out) = Na(+)(out) + 2 H(+)(in). In terms of biological role, na(+)/H(+) antiporter that extrudes sodium in exchange for external protons. This Psychrobacter cryohalolentis (strain ATCC BAA-1226 / DSM 17306 / VKM B-2378 / K5) protein is Na(+)/H(+) antiporter NhaA.